A 495-amino-acid polypeptide reads, in one-letter code: Adenosylhomocysteinase (495 aa).

Substrate is bound by residues Thr71, Asp156, and Glu218. 219 to 221 (TTT) is a binding site for NAD(+). 2 residues coordinate substrate: Lys248 and Asp252. NAD(+) contacts are provided by residues Asn253, 282-287 (GYGDVG), Glu305, Asn340, 361-363 (IGH), and Asn409.

Belongs to the adenosylhomocysteinase family. The cofactor is NAD(+).

The protein resides in the cytoplasm. It carries out the reaction S-adenosyl-L-homocysteine + H2O = L-homocysteine + adenosine. The protein operates within amino-acid biosynthesis; L-homocysteine biosynthesis; L-homocysteine from S-adenosyl-L-homocysteine: step 1/1. Functionally, may play a key role in the regulation of the intracellular concentration of adenosylhomocysteine. This is Adenosylhomocysteinase from Mycobacterium tuberculosis (strain ATCC 25177 / H37Ra).